A 387-amino-acid polypeptide reads, in one-letter code: Galanin receptor type 2 (387 aa).

Over 1–28 (MNVSGCPGAGNASQAGGGGGWHPEAVIV) the chain is Extracellular. Asparagine 2 and asparagine 11 each carry an N-linked (GlcNAc...) asparagine glycan. A helical transmembrane segment spans residues 29–49 (PLLFALIFLVGTVGNTLVLAV). The Cytoplasmic portion of the chain corresponds to 50-60 (LLRGGQAVSTT). Residues 61–81 (NLFILNLGVADLCFILCCVPF) form a helical membrane-spanning segment. Topologically, residues 82–99 (QATIYTLDGWVFGSLLCK) are extracellular. Residues cysteine 98 and cysteine 175 are joined by a disulfide bond. A helical membrane pass occupies residues 100–121 (AVHFLIFLTMHASSFTLAAVSL). Topologically, residues 122–141 (DRYLAIRYPLHSRELRTPRN) are cytoplasmic. The chain crosses the membrane as a helical span at residues 142–162 (ALAAIGLIWGLSLLFSGPYLS). Over 163-187 (YYRQSQLANLTVCHPAWSAPRRRAM) the chain is Extracellular. Residues 188–208 (DICTFVFSYLLPVLVLGLTYA) form a helical membrane-spanning segment. The Cytoplasmic portion of the chain corresponds to 209 to 237 (RTLRYLWRAVDPVAAGSGARRAKRKVTRM). Residues 238–258 (ILIVAALFCLCWMPHHALILC) form a helical membrane-spanning segment. Topologically, residues 259-260 (VW) are extracellular. Residues 261 to 281 (FGQFPLTRATYALRILSHLVS) form a helical membrane-spanning segment. Over 282–387 (YANSCVNPIV…GDSILTVDVA (106 aa)) the chain is Cytoplasmic.

The protein belongs to the G-protein coupled receptor 1 family. Expressed abundantly within the central nervous system in both hypothalamus and hippocampus. In peripheral tissues, the strongest expression was observed in heart, kidney, liver, and small intestine.

The protein resides in the cell membrane. Functionally, receptor for the hormone galanin and GALP. Receptor for the hormone spexin-1. The activity of this receptor is mediated by G proteins that activate the phospholipase C/protein kinase C pathway (via G(q)) and that inhibit adenylyl cyclase (via G(i)). This is Galanin receptor type 2 (GALR2) from Homo sapiens (Human).